A 954-amino-acid chain; its full sequence is Glycine dehydrogenase (decarboxylating) (954 aa).

Lys-700 carries the post-translational modification N6-(pyridoxal phosphate)lysine.

Belongs to the GcvP family. In terms of assembly, the glycine cleavage system is composed of four proteins: P, T, L and H. Requires pyridoxal 5'-phosphate as cofactor.

It carries out the reaction N(6)-[(R)-lipoyl]-L-lysyl-[glycine-cleavage complex H protein] + glycine + H(+) = N(6)-[(R)-S(8)-aminomethyldihydrolipoyl]-L-lysyl-[glycine-cleavage complex H protein] + CO2. Its function is as follows. The glycine cleavage system catalyzes the degradation of glycine. The P protein binds the alpha-amino group of glycine through its pyridoxal phosphate cofactor; CO(2) is released and the remaining methylamine moiety is then transferred to the lipoamide cofactor of the H protein. The protein is Glycine dehydrogenase (decarboxylating) of Dinoroseobacter shibae (strain DSM 16493 / NCIMB 14021 / DFL 12).